The following is a 162-amino-acid chain: Interleukin-15 (162 aa).

The first 29 residues, 1–29 (MRISKPHLRSISIQCYLCLLLKSHFLTEA), serve as a signal peptide directing secretion. The propeptide occupies 30 to 48 (GIHVFILGCFSAGLPKTEA). 2 disulfides stabilise this stretch: Cys-83–Cys-133 and Cys-90–Cys-136. N-linked (GlcNAc...) asparagine glycosylation is present at Asn-127.

It belongs to the IL-15/IL-21 family.

The protein localises to the secreted. Functionally, cytokine that plays a major role in the development of inflammatory and protective immune responses to microbial invaders and parasites by modulating immune cells of both the innate and adaptive immune systems. Stimulates the proliferation of natural killer cells, T-cells and B-cells and promotes the secretion of several cytokines. In monocytes, induces the production of IL8 and monocyte chemotactic protein 1/CCL2, two chemokines that attract neutrophils and monocytes respectively to sites of infection. Unlike most cytokines, which are secreted in soluble form, IL15 is expressed in association with its high affinity IL15RA on the surface of IL15-producing cells and delivers signals to target cells that express IL2RB and IL2RG receptor subunits. Binding to its receptor triggers the phosphorylation of JAK1 and JAK3 and the recruitment and subsequent phosphorylation of signal transducer and activator of transcription-3/STAT3 and STAT5. In mast cells, induces the rapid tyrosine phosphorylation of STAT6 and thereby controls mast cell survival and release of cytokines such as IL4. The protein is Interleukin-15 (IL15) of Chlorocebus aethiops (Green monkey).